We begin with the raw amino-acid sequence, 335 residues long: Mitochondrial thiamine diphosphate carrier 1 (335 aa).

The next 6 helical transmembrane spans lie at lysine 13 to serine 29, valine 88 to leucine 105, tyrosine 127 to leucine 150, leucine 182 to leucine 199, serine 231 to valine 247, and glycine 304 to tyrosine 323. Solcar repeat units follow at residues lysine 13–phenylalanine 111, leucine 124–tryptophan 210, and leucine 232–tryptophan 329.

It belongs to the mitochondrial carrier (TC 2.A.29) family.

It is found in the mitochondrion inner membrane. Its function is as follows. Mitochondrial transporter that mediates uptake of thiamine diphosphate (ThDP) into mitochondria. The polypeptide is Mitochondrial thiamine diphosphate carrier 1 (Arabidopsis thaliana (Mouse-ear cress)).